A 1857-amino-acid polypeptide reads, in one-letter code: Fer-1-like protein 6 (1857 aa).

Residues 1–1824 (MFGLKVKKKR…YLIWKNYKKY (1824 aa)) are Cytoplasmic-facing. Residues 15–63 (KGLILANKAAKDSQGDTEALQEEPSHQEGPRGDLVHDDASIFPVPSASP) form a disordered region. Positions 37–53 (EPSHQEGPRGDLVHDDA) are enriched in basic and acidic residues. C2 domains follow at residues 65–181 (RRSK…QFCN) and 225–356 (PIEK…DKGF). Over residues 426 to 447 (SKDKDSKSSKGKDKADKTEDGK) the composition is skewed to basic and acidic residues. A disordered region spans residues 426-469 (SKDKDSKSSKGKDKADKTEDGKSQQASNKTNSTEVEVESFDVPP). Residues 448–459 (SQQASNKTNSTE) are compositionally biased toward polar residues. C2 domains are found at residues 810–937 (GTNH…RLCY) and 969–1099 (PVEP…LAPI). Ca(2+)-binding residues include aspartate 842, aspartate 848, aspartate 904, and aspartate 906. 3 disordered regions span residues 1101 to 1148 (QVDG…VVPD), 1161 to 1203 (PDSS…RTIA), and 1224 to 1246 (AQKA…PDEV). Over residues 1113-1129 (DSLTATESSGAHSSSQD) the composition is skewed to polar residues. Residues 1178–1189 (PPKDGKPKDPRK) are compositionally biased toward basic and acidic residues. Residues 1190-1200 (PSRRSTKRRKR) are compositionally biased toward basic residues. Residues 1226–1245 (KAKERNPKGKKGNTEAKPDE) show a composition bias toward basic and acidic residues. C2 domains lie at 1338–1457 (DSGQ…AICG) and 1578–1729 (DMPQ…KACD). Aspartate 1372, aspartate 1378, aspartate 1427, aspartate 1429, and aspartate 1435 together coordinate Ca(2+). Residues 1825 to 1845 (IIIAFILIILIIFLVLFIYTL) form a helical membrane-spanning segment. The Extracellular portion of the chain corresponds to 1846–1857 (PGAISRRIVVGS).

This sequence belongs to the ferlin family. It depends on Ca(2+) as a cofactor.

Its subcellular location is the membrane. The protein is Fer-1-like protein 6 (FER1L6) of Homo sapiens (Human).